Here is a 450-residue protein sequence, read N- to C-terminus: Bifunctional protein GlmU (450 aa).

Residues 1-229 (MRRHAIILAA…VEEIMGVNDR (229 aa)) are pyrophosphorylase. UDP-N-acetyl-alpha-D-glucosamine is bound by residues 8-11 (LAAG), lysine 22, glutamine 72, and 77-78 (GT). Residue aspartate 102 participates in Mg(2+) binding. UDP-N-acetyl-alpha-D-glucosamine contacts are provided by glycine 139, glutamate 154, and asparagine 227. Asparagine 227 contacts Mg(2+). Residues 230 to 250 (VMLSQAEKAMQRRTNHYHMLN) form a linker region. The N-acetyltransferase stretch occupies residues 251–450 (GVTIIDPDST…RQTTKEGYRK (200 aa)). Residues arginine 332 and lysine 350 each contribute to the UDP-N-acetyl-alpha-D-glucosamine site. Histidine 362 serves as the catalytic Proton acceptor. Tyrosine 365 and asparagine 376 together coordinate UDP-N-acetyl-alpha-D-glucosamine. Acetyl-CoA-binding positions include 385–386 (NY), alanine 422, and arginine 439.

The protein in the N-terminal section; belongs to the N-acetylglucosamine-1-phosphate uridyltransferase family. It in the C-terminal section; belongs to the transferase hexapeptide repeat family. As to quaternary structure, homotrimer. Requires Mg(2+) as cofactor.

Its subcellular location is the cytoplasm. The catalysed reaction is alpha-D-glucosamine 1-phosphate + acetyl-CoA = N-acetyl-alpha-D-glucosamine 1-phosphate + CoA + H(+). The enzyme catalyses N-acetyl-alpha-D-glucosamine 1-phosphate + UTP + H(+) = UDP-N-acetyl-alpha-D-glucosamine + diphosphate. Its pathway is nucleotide-sugar biosynthesis; UDP-N-acetyl-alpha-D-glucosamine biosynthesis; N-acetyl-alpha-D-glucosamine 1-phosphate from alpha-D-glucosamine 6-phosphate (route II): step 2/2. It participates in nucleotide-sugar biosynthesis; UDP-N-acetyl-alpha-D-glucosamine biosynthesis; UDP-N-acetyl-alpha-D-glucosamine from N-acetyl-alpha-D-glucosamine 1-phosphate: step 1/1. The protein operates within bacterial outer membrane biogenesis; LPS lipid A biosynthesis. Its function is as follows. Catalyzes the last two sequential reactions in the de novo biosynthetic pathway for UDP-N-acetylglucosamine (UDP-GlcNAc). The C-terminal domain catalyzes the transfer of acetyl group from acetyl coenzyme A to glucosamine-1-phosphate (GlcN-1-P) to produce N-acetylglucosamine-1-phosphate (GlcNAc-1-P), which is converted into UDP-GlcNAc by the transfer of uridine 5-monophosphate (from uridine 5-triphosphate), a reaction catalyzed by the N-terminal domain. The chain is Bifunctional protein GlmU from Staphylococcus aureus (strain USA300).